Consider the following 1145-residue polypeptide: DNA polymerase subunit gamma-1, mitochondrial (1145 aa).

A mitochondrion-targeting transit peptide spans 1 to 9; the sequence is MQFHLIRKY.

The protein belongs to the DNA polymerase type-A family. Component of the DNA polymerase gamma complex consisting of two subunits: the catalytic subunit DNApol-gamma/DNApolG1 and the accessory subunit PolG2/DNApol-gamma35. Requires Mg(2+) as cofactor.

The protein resides in the mitochondrion. The enzyme catalyses DNA(n) + a 2'-deoxyribonucleoside 5'-triphosphate = DNA(n+1) + diphosphate. Stimulated by KCl, and inhibited by the small molecules o 2',3'-dideoxythymidine 5'-triphosphate (d2TTP) and N-ethylmaleimide (NEM). As the catalytic component of the DNA polymerase gamma complex is involved in the replication of mitochondrial DNA (mtDNA). Has both 5'-3' DNA polymerase and a highly mispair-specific 3'-5' exonuclease activity. At the end of mtDNA replication DNA ends are ligated to produce a closed circular mtDNA molecule, its exonuclease activity is required for formation of these ligatable ends by preventing DNA synthesis from continuing past the 5'-end of downstream DNA into duplex DNA regions. Does not possess DNA primase activity, does not catalyze strand displacement synthesis and does not contain a 5'-3' exonuclease activity to catalyze nick translation. Important for promoting the elimination of paternal mitochondrial DNA during spermatogenesis, however its exact role in this function has not yet been identified and appears to be independent of its 3'-5'-exonuclease activity and only partially dependent on its DNA polymerase activity. The protein is DNA polymerase subunit gamma-1, mitochondrial of Drosophila melanogaster (Fruit fly).